The sequence spans 158 residues: Small ribosomal subunit protein uS19 (158 aa).

The protein belongs to the universal ribosomal protein uS19 family.

In terms of biological role, protein S19 forms a complex with S13 that binds strongly to the 16S ribosomal RNA. The polypeptide is Small ribosomal subunit protein uS19 (Pyrobaculum calidifontis (strain DSM 21063 / JCM 11548 / VA1)).